A 942-amino-acid polypeptide reads, in one-letter code: Lon protease homolog 4, chloroplastic/mitochondrial (942 aa).

A Phosphoserine modification is found at serine 54. A Lon N-terminal domain is found at 79–301 (VIALPLPHKP…LTLELVKKEV (223 aa)). 456-463 (GPTGVGKT) lines the ATP pocket. The disordered stretch occupies residues 673-725 (ISDDVTTDTEETKSLAKTDLESPETSAEGSTVLTDELATGDPTESTTEQSGEV). Residues 682–692 (EETKSLAKTDL) are compositionally biased toward basic and acidic residues. Residues 695 to 705 (PETSAEGSTVL) are compositionally biased toward polar residues. Residues 756–940 (QTPVGVVMGL…EQIFELAFGY (185 aa)) form the Lon proteolytic domain. Active-site residues include serine 846 and lysine 889.

The protein belongs to the peptidase S16 family. As to quaternary structure, homohexamer or homoheptamer. Organized in a ring with a central cavity.

Its subcellular location is the mitochondrion matrix. It localises to the plastid. The protein resides in the chloroplast thylakoid membrane. The catalysed reaction is Hydrolysis of proteins in presence of ATP.. Functionally, ATP-dependent serine protease that mediates the selective degradation of misfolded, unassembled or oxidatively damaged polypeptides as well as certain short-lived regulatory proteins in the mitochondrial matrix. May also have a chaperone function in the assembly of inner membrane protein complexes. Participates in the regulation of mitochondrial gene expression and in the maintenance of the integrity of the mitochondrial genome. Binds to mitochondrial DNA in a site-specific manner. In Arabidopsis thaliana (Mouse-ear cress), this protein is Lon protease homolog 4, chloroplastic/mitochondrial (LON4).